We begin with the raw amino-acid sequence, 121 residues long: Holo-[acyl-carrier-protein] synthase (121 aa).

The Mg(2+) site is built by Asp-8 and Glu-58.

This sequence belongs to the P-Pant transferase superfamily. AcpS family. In terms of assembly, homotrimer. Mg(2+) is required as a cofactor.

Its subcellular location is the cytoplasm. It carries out the reaction apo-[ACP] + CoA = holo-[ACP] + adenosine 3',5'-bisphosphate + H(+). Transfers the 4'-phosphopantetheine moiety from coenzyme A to a Ser of fatty acid acyl-carrier-protein ACP. Also modifies the D-alanyl carrier protein but fails to recognize PCP and AcpK, an acyl carrier protein of secondary metabolism. The sequence is that of Holo-[acyl-carrier-protein] synthase from Bacillus subtilis (strain 168).